Consider the following 140-residue polypeptide: Nucleoside diphosphate kinase (140 aa).

ATP contacts are provided by Lys-11, Phe-59, Arg-87, Thr-93, Arg-104, and Asn-114. His-117 functions as the Pros-phosphohistidine intermediate in the catalytic mechanism.

The protein belongs to the NDK family. In terms of assembly, homotetramer. Mg(2+) is required as a cofactor.

The protein resides in the cytoplasm. It carries out the reaction a 2'-deoxyribonucleoside 5'-diphosphate + ATP = a 2'-deoxyribonucleoside 5'-triphosphate + ADP. The enzyme catalyses a ribonucleoside 5'-diphosphate + ATP = a ribonucleoside 5'-triphosphate + ADP. In terms of biological role, major role in the synthesis of nucleoside triphosphates other than ATP. The ATP gamma phosphate is transferred to the NDP beta phosphate via a ping-pong mechanism, using a phosphorylated active-site intermediate. The sequence is that of Nucleoside diphosphate kinase from Rickettsia prowazekii (strain Madrid E).